A 150-amino-acid polypeptide reads, in one-letter code: Phosphopantetheine adenylyltransferase (150 aa).

Residue T9 participates in substrate binding. Residues 9–10 (TF) and H17 each bind ATP. 3 residues coordinate substrate: K41, T73, and R87. Residues 88 to 90 (GIR), E98, and 122 to 128 (LTCVSST) contribute to the ATP site.

It belongs to the bacterial CoaD family. Homohexamer. It depends on Mg(2+) as a cofactor.

Its subcellular location is the cytoplasm. The enzyme catalyses (R)-4'-phosphopantetheine + ATP + H(+) = 3'-dephospho-CoA + diphosphate. It functions in the pathway cofactor biosynthesis; coenzyme A biosynthesis; CoA from (R)-pantothenate: step 4/5. In terms of biological role, reversibly transfers an adenylyl group from ATP to 4'-phosphopantetheine, yielding dephospho-CoA (dPCoA) and pyrophosphate. The protein is Phosphopantetheine adenylyltransferase of Bacteroides fragilis (strain ATCC 25285 / DSM 2151 / CCUG 4856 / JCM 11019 / LMG 10263 / NCTC 9343 / Onslow / VPI 2553 / EN-2).